The primary structure comprises 446 residues: MAANVPPSAETLLSGAAAHPPKTAEEIANQYDLLPKLIPYLDRHLVFPLLEFSSGQDDDKEVVRAKYELLKHTNMTDYVANLWKEINNSDTIPDEFVKKREEVLAKLENYQEESSKITELLQDEAVVGNLRSDKVANLRFLEEQHGVTLDMVNSLYDYGRFQYSCGSYGTAAELLYQFRVLSTDNDKVASATWGKLASEILTTSWEGAMEEVQKVKESIETRLFNNPLGQLENRSWLIHWSLFPFFNYDPARDVLTDLFFSPAYINTIQTNCPWILRYLAAAVITNRNRAHKNSSAYQKQLKDLIRVVRQEGYEYSDPITDFVKALYIDFDFEEAQKKLGEAEDVLRSDFFLVSAADAFVEAARHLISESYCKIHQRIDIKDLSTRLGLNQDEGEKWIVNLIRDTRVDAKIDYKEGTVIMNHPPQSVYQQVIEKTKGAFFRTQVLR.

Residues 256 to 425 form the PCI domain; the sequence is TDLFFSPAYI…GTVIMNHPPQ (170 aa).

It belongs to the eIF-3 subunit E family. In terms of assembly, component of the eukaryotic translation initiation factor 3 (eIF-3) complex.

It localises to the cytoplasm. Its function is as follows. Component of the eukaryotic translation initiation factor 3 (eIF-3) complex, which is involved in protein synthesis of a specialized repertoire of mRNAs and, together with other initiation factors, stimulates binding of mRNA and methionyl-tRNAi to the 40S ribosome. The eIF-3 complex specifically targets and initiates translation of a subset of mRNAs involved in cell proliferation. This chain is Eukaryotic translation initiation factor 3 subunit E (int6), found in Aspergillus terreus (strain NIH 2624 / FGSC A1156).